The primary structure comprises 175 residues: Adenine phosphoribosyltransferase (175 aa).

This sequence belongs to the purine/pyrimidine phosphoribosyltransferase family. In terms of assembly, homodimer.

Its subcellular location is the cytoplasm. It carries out the reaction AMP + diphosphate = 5-phospho-alpha-D-ribose 1-diphosphate + adenine. It functions in the pathway purine metabolism; AMP biosynthesis via salvage pathway; AMP from adenine: step 1/1. In terms of biological role, catalyzes a salvage reaction resulting in the formation of AMP, that is energically less costly than de novo synthesis. The protein is Adenine phosphoribosyltransferase of Francisella tularensis subsp. tularensis (strain WY96-3418).